The sequence spans 36 residues: uncharacterized protein (36 aa).

This is an uncharacterized protein from Treponema pallidum (strain Nichols).